A 513-amino-acid polypeptide reads, in one-letter code: Cytochrome P450 monooxygenase sthF (513 aa).

The next 2 membrane-spanning stretches (helical) occupy residues 13 to 33 (FPSL…YIFI) and 212 to 232 (MLHP…IILL). Cys452 provides a ligand contact to heme.

This sequence belongs to the cytochrome P450 family. It depends on heme as a cofactor.

It is found in the membrane. The catalysed reaction is dehydroprobetaenone I + NADPH + O2 + H(+) = epoxybetaenone + NADP(+) + H2O. It catalyses the reaction dehydroprobetaenone I + 3 NADPH + 3 O2 + 3 H(+) = betaenone C + 3 NADP(+) + 3 H2O. The enzyme catalyses probetaenone I + 3 NADPH + 3 O2 + 3 H(+) = betaenone B + 3 NADP(+) + 3 H2O. Its pathway is mycotoxin biosynthesis. Functionally, cytochrome P450 monooxygenase; part of the gene cluster that mediates the biosynthesis of the phytotoxin stemphyloxin II. The first step of the pathway is the synthesis of dehydroprobetaenone I by the polyketide synthase sthA and the enoyl reductase sthE via condensation of one acetyl-CoA starter unit with 7 malonyl-CoA units and 5 methylations. The C-terminal reductase (R) domain of sthA catalyzes the reductive release of the polyketide chain. Because sthA lacks a designated enoylreductase (ER) domain, the required activity is provided the enoyl reductase sthE. The short-chain dehydrogenase/reductase sthC then catalyzes reduction of dehydroprobetaenone I to probetaenone I. The cytochrome P450 monooxygenase sthF catalyzes successive epoxidation, oxidation (resulting from epoxide opening) and hydroxylation to install a tertiary alcohol in the decaline ring to yield betaenone C from dehydroprobetaenone I and betaenone B from probetaenone I. The FAD-linked oxidoreductase sthB is responsible for the conversion of betaenone C to betaenone A via an intramolecular aldol reaction between C-1 and C-17 to form the bridged tricyclic system in betaenone A. Finally, the cytochrome P450 monooxygenase sthD catalyzes the hydroxylation of C-15 to afford the final metabolite stemphyloxin II. The sequence is that of Cytochrome P450 monooxygenase sthF from Phaeosphaeria nodorum (strain SN15 / ATCC MYA-4574 / FGSC 10173) (Glume blotch fungus).